The chain runs to 510 residues: ATP synthase subunit alpha (510 aa).

169 to 176 contributes to the ATP binding site; it reads GDRQTGKT.

Belongs to the ATPase alpha/beta chains family. In terms of assembly, F-type ATPases have 2 components, CF(1) - the catalytic core - and CF(0) - the membrane proton channel. CF(1) has five subunits: alpha(3), beta(3), gamma(1), delta(1), epsilon(1). CF(0) has three main subunits: a(1), b(2) and c(9-12). The alpha and beta chains form an alternating ring which encloses part of the gamma chain. CF(1) is attached to CF(0) by a central stalk formed by the gamma and epsilon chains, while a peripheral stalk is formed by the delta and b chains.

The protein resides in the cell inner membrane. The catalysed reaction is ATP + H2O + 4 H(+)(in) = ADP + phosphate + 5 H(+)(out). Functionally, produces ATP from ADP in the presence of a proton gradient across the membrane. The alpha chain is a regulatory subunit. This is ATP synthase subunit alpha from Afipia carboxidovorans (strain ATCC 49405 / DSM 1227 / KCTC 32145 / OM5) (Oligotropha carboxidovorans).